We begin with the raw amino-acid sequence, 648 residues long: Siderophore transporter MYCGRDRAFT_70577 (648 aa).

2 stretches are compositionally biased toward basic and acidic residues: residues Met-1–Ser-11 and Ser-29–Ile-46. Residues Met-1–Ala-58 form a disordered region. The span at Asn-47–Ala-58 shows a compositional bias: polar residues. Transmembrane regions (helical) follow at residues Leu-79–Gln-99, Val-151–Ala-171, Ala-205–Ile-225, Trp-236–Leu-256, Leu-303–Ala-323, Ile-336–Leu-356, Thr-409–Ile-429, Thr-438–Asn-458, Leu-468–Gly-488, Val-500–Ala-520, and Gly-578–Met-598.

It belongs to the major facilitator superfamily.

Its subcellular location is the cell membrane. In terms of biological role, siderophore transporter; part of the gene cluster 14 that mediates the biosynthesis of a ferrichrome A-like siderophors which may contribute to organismal virulence. This is Siderophore transporter MYCGRDRAFT_70577 from Zymoseptoria tritici (strain CBS 115943 / IPO323) (Speckled leaf blotch fungus).